The following is a 161-amino-acid chain: Ribosome maturation factor RimP (161 aa).

The protein belongs to the RimP family.

It is found in the cytoplasm. Functionally, required for maturation of 30S ribosomal subunits. The polypeptide is Ribosome maturation factor RimP (Rickettsia felis (strain ATCC VR-1525 / URRWXCal2) (Rickettsia azadi)).